The chain runs to 336 residues: Fructose-1,6-bisphosphatase class 1 (336 aa).

The Mg(2+) site is built by Glu-90, Asp-112, Leu-114, and Asp-115. Substrate is bound by residues Asp-115 to Ser-118, Asn-207, and Lys-273. Glu-279 lines the Mg(2+) pocket.

It belongs to the FBPase class 1 family. In terms of assembly, homotetramer. Mg(2+) is required as a cofactor.

The protein resides in the cytoplasm. It carries out the reaction beta-D-fructose 1,6-bisphosphate + H2O = beta-D-fructose 6-phosphate + phosphate. Its pathway is carbohydrate biosynthesis; gluconeogenesis. This chain is Fructose-1,6-bisphosphatase class 1, found in Xanthomonas euvesicatoria pv. vesicatoria (strain 85-10) (Xanthomonas campestris pv. vesicatoria).